The sequence spans 150 residues: Endoribonuclease YbeY (150 aa).

3 residues coordinate Zn(2+): His-116, His-120, and His-126.

Belongs to the endoribonuclease YbeY family. The cofactor is Zn(2+).

Its subcellular location is the cytoplasm. Single strand-specific metallo-endoribonuclease involved in late-stage 70S ribosome quality control and in maturation of the 3' terminus of the 16S rRNA. The sequence is that of Endoribonuclease YbeY from Beutenbergia cavernae (strain ATCC BAA-8 / DSM 12333 / CCUG 43141 / JCM 11478 / NBRC 16432 / NCIMB 13614 / HKI 0122).